A 304-amino-acid polypeptide reads, in one-letter code: Dihydroorotate dehydrogenase B (NAD(+)), catalytic subunit (304 aa).

FMN-binding positions include serine 21 and lysine 45–alanine 46. Substrate contacts are provided by residues lysine 45 and asparagine 69 to leucine 73. Residues asparagine 99 and asparagine 127 each contribute to the FMN site. A substrate-binding site is contributed by asparagine 127. Cysteine 130 acts as the Nucleophile in catalysis. 2 residues coordinate FMN: lysine 165 and isoleucine 191. Asparagine 192–threonine 193 provides a ligand contact to substrate. FMN contacts are provided by residues glycine 217, glycine 243–glycine 244, and glycine 265–threonine 266.

It belongs to the dihydroorotate dehydrogenase family. Type 1 subfamily. As to quaternary structure, heterotetramer of 2 PyrK and 2 PyrD type B subunits. The cofactor is FMN.

The protein resides in the cytoplasm. It catalyses the reaction (S)-dihydroorotate + NAD(+) = orotate + NADH + H(+). Its pathway is pyrimidine metabolism; UMP biosynthesis via de novo pathway; orotate from (S)-dihydroorotate (NAD(+) route): step 1/1. Its function is as follows. Catalyzes the conversion of dihydroorotate to orotate with NAD(+) as electron acceptor. The protein is Dihydroorotate dehydrogenase B (NAD(+)), catalytic subunit (pyrD) of Listeria innocua serovar 6a (strain ATCC BAA-680 / CLIP 11262).